The chain runs to 104 residues: Small ribosomal subunit protein uS10 (104 aa).

It belongs to the universal ribosomal protein uS10 family. As to quaternary structure, part of the 30S ribosomal subunit.

Its function is as follows. Involved in the binding of tRNA to the ribosomes. This chain is Small ribosomal subunit protein uS10, found in Aquifex aeolicus (strain VF5).